The following is a 348-amino-acid chain: MDLAANEISIYDKLSETVDLVRQTGHQCGMSEKAIEKFIRQLLEKNEPQRGPPQYPLLIAMYKVLLTLGLILFTAYFVIQPFSSLAPEPVLSGAHTWRSLIHHIRLVSLPITKKYMPENKGVPLQGREEDKPFPDFDPWSSNNCEQNESEPIPANCTVCAQILPLKVTLPEDTPKNFERLRPLVIKTGQPLLSAEIQSFSCQYPEVTEGFTEGVLTKWWRCFPERWFPFPYPWRRPLNRSQILRELFPVFTQLPFPKDASLNKCFLIQPEPVVGSKMHEVHDLFTIGSGEAMLQLIPPFQCRRHCQSVAMPIESGDIGYAGAAHWKVYIVARGVQPLVICDGTTLSEL.

The Cytoplasmic segment spans residues 1-58 (MDLAANEISIYDKLSETVDLVRQTGHQCGMSEKAIEKFIRQLLEKNEPQRGPPQYPLL). The helical transmembrane segment at 59-79 (IAMYKVLLTLGLILFTAYFVI) threads the bilayer. Residues 80-348 (QPFSSLAPEP…ICDGTTLSEL (269 aa)) are Extracellular-facing.

In terms of assembly, homodimer. Interacts with BRS3. Interacts (via N-terminus) with SIN3B. Glycosylated.

The protein resides in the golgi apparatus membrane. It localises to the cytoplasm. Its function is as follows. Exhibits histone deacetylase (HDAC) enhancer properties. May play a role in cell cycle progression and wound repair of bronchial epithelial cells. This Rattus norvegicus (Rat) protein is Bombesin receptor-activated protein C6orf89 homolog.